The chain runs to 586 residues: Arginine--tRNA ligase (586 aa).

A 'HIGH' region motif is present at residues 133 to 143 (ANPTGPLNIVS).

It belongs to the class-I aminoacyl-tRNA synthetase family. As to quaternary structure, monomer.

The protein resides in the cytoplasm. The enzyme catalyses tRNA(Arg) + L-arginine + ATP = L-arginyl-tRNA(Arg) + AMP + diphosphate. The polypeptide is Arginine--tRNA ligase (Leptospira borgpetersenii serovar Hardjo-bovis (strain JB197)).